A 67-amino-acid polypeptide reads, in one-letter code: Conotoxin Cl14c (67 aa).

The signal sequence occupies residues 1–20 (MNVTVMFLVLLLLTMPLTDG). Residues 21–48 (FNIRATNGGELFGPVQRDAGNVLDHGFQ) constitute a propeptide that is removed on maturation.

The protein belongs to the conotoxin L superfamily. In terms of processing, contains 2 disulfide bonds. As to expression, expressed by the venom duct.

It is found in the secreted. In Californiconus californicus (California cone), this protein is Conotoxin Cl14c.